Consider the following 551-residue polypeptide: Palmdelphin (551 aa).

Met1 bears the N-acetylmethionine mark. A coiled-coil region spans residues 2–106 (EEAELVKERL…LQISTNEEAI (105 aa)). Lys125 participates in a covalent cross-link: Glycyl lysine isopeptide (Lys-Gly) (interchain with G-Cter in SUMO2). Ser135 is modified (phosphoserine). A Glycyl lysine isopeptide (Lys-Gly) (interchain with G-Cter in SUMO1); alternate cross-link involves residue Lys179. Lys179 is covalently cross-linked (Glycyl lysine isopeptide (Lys-Gly) (interchain with G-Cter in SUMO2); alternate). Residues 247-259 (SERNSKSPTEYHD) show a composition bias toward basic and acidic residues. Disordered stretches follow at residues 247–393 (SERN…EDEE) and 450–529 (EEEE…IAGD). Thr271 bears the Phosphothreonine mark. A phosphoserine mark is found at Ser321, Ser370, Ser384, and Ser385. Over residues 484 to 495 (KRAEVNPHENTN) the composition is skewed to basic and acidic residues. A phosphoserine mark is found at Ser498, Ser515, and Ser520.

This sequence belongs to the paralemmin family. In terms of assembly, interacts with GLUL. Cell projection, dendrite. Cell projection, dendritic spine. In terms of processing, phosphorylated.

Its subcellular location is the cytoplasm. The protein resides in the cell projection. It is found in the dendrite. The protein localises to the dendritic spine. The sequence is that of Palmdelphin (PALMD) from Sus scrofa (Pig).